The following is a 377-amino-acid chain: MPRRLQPRGAGTKGPPAPAPAASGAARNSHSAASRDPPASAKPLLRWDEVPDDFVECFILSGYRRLPCTAQECLASVLKPTNETLNFWTHFIPLLLFLSKFCRLFFLSGGDVPFHHPWLLPLWCYASGVLLTFAMSCTAHVFSCLSLRLRAAFFYLDYASISYYGFGSTVAYYYYLLPGLSLLDARVMTPYLQQRLGWHVDCTRLIAAYRALVLPVAFVLAVACTVACCKSRTDWCTYPFALRTFVFVMPLSMACPIMLESWLFDLRGENPTLFVHFYRRYFWLVVAAFFNVSKIPERIQPGLFDIIGHSHQLFHIFTFLSIYDQVYYVEEGLRQFLQAPPAAPTFSGTVGYMLLLVVCLGLVIRKFLNSSEFCSKK.

Residues 1–40 form a disordered region; sequence MPRRLQPRGAGTKGPPAPAPAASGAARNSHSAASRDPPAS. Residues 1–86 are Cytoplasmic-facing; sequence MPRRLQPRGA…VLKPTNETLN (86 aa). A compositionally biased stretch (low complexity) spans 9–26; the sequence is GAGTKGPPAPAPAASGAA. A helical transmembrane segment spans residues 87-107; it reads FWTHFIPLLLFLSKFCRLFFL. The Extracellular portion of the chain corresponds to 108-116; that stretch reads SGGDVPFHH. Residues 117 to 137 form a helical membrane-spanning segment; that stretch reads PWLLPLWCYASGVLLTFAMSC. Over 138–162 the chain is Cytoplasmic; sequence TAHVFSCLSLRLRAAFFYLDYASIS. A helical transmembrane segment spans residues 163–183; that stretch reads YYGFGSTVAYYYYLLPGLSLL. Residues 184–205 lie on the Extracellular side of the membrane; sequence DARVMTPYLQQRLGWHVDCTRL. The chain crosses the membrane as a helical span at residues 206–226; that stretch reads IAAYRALVLPVAFVLAVACTV. The Cytoplasmic portion of the chain corresponds to 227-243; that stretch reads ACCKSRTDWCTYPFALR. The chain crosses the membrane as a helical span at residues 244–264; the sequence is TFVFVMPLSMACPIMLESWLF. Residues 265–301 lie on the Extracellular side of the membrane; that stretch reads DLRGENPTLFVHFYRRYFWLVVAAFFNVSKIPERIQP. A helical transmembrane segment spans residues 302–322; sequence GLFDIIGHSHQLFHIFTFLSI. Over 323–343 the chain is Cytoplasmic; that stretch reads YDQVYYVEEGLRQFLQAPPAA. The chain crosses the membrane as a helical span at residues 344–364; that stretch reads PTFSGTVGYMLLLVVCLGLVI. At 365-377 the chain is on the extracellular side; the sequence is RKFLNSSEFCSKK.

The protein belongs to the ADIPOR family. Homodimer. In terms of tissue distribution, expression levels vary widely in a range of tissues. Expressed in the brain, at high level in the pituitary gland and also in hypothalamus, limbic system, caudate nucleus accumens, pons and olfactory bulb.

Its subcellular location is the cell membrane. Functionally, plasma membrane progesterone (P4) receptor coupled to G proteins. Seems to act through a G(s) mediated pathway. May be involved in regulating rapid P4 signaling in the nervous system. Also binds dehydroepiandrosterone (DHEA), pregnanolone, pregnenolone and allopregnanolone. The sequence is that of Membrane progestin receptor epsilon from Homo sapiens (Human).